Reading from the N-terminus, the 441-residue chain is Sec-independent protein translocase protein TatCo (441 aa).

The tract at residues 1–185 is disordered; the sequence is MADEERDAGL…LVGEAPESDQ (185 aa). Acidic residues predominate over residues 13–22; that stretch reads ADDETDASDD. The span at 51–62 shows a compositional bias: basic and acidic residues; it reads TPRDETVTHGSD. Residues 75–104 are compositionally biased toward acidic residues; sequence DNGDDSDSDTDAAPDDADDSATDSDADSDD. Residues 105–117 show a composition bias toward basic and acidic residues; sequence EPRLLADDEHTSH. 2 stretches are compositionally biased toward acidic residues: residues 122–138 and 164–173; these read TYDD…DPDA and EDADFDDEDV. The next 6 membrane-spanning stretches (helical) occupy residues 200–220, 276–296, 317–337, 357–377, 395–415, and 416–436; these read LAVV…GADI, VAGL…TYLF, LVLA…AIFA, FNLI…PLFV, RLLF…DPTG, and MAPI…LAAL.

It belongs to the TatC family. In terms of assembly, forms a complex with TatA.

It localises to the cell membrane. In terms of biological role, part of the twin-arginine translocation (Tat) system that transports large folded proteins containing a characteristic twin-arginine motif in their signal peptide across membranes. In Haloferax volcanii (strain ATCC 29605 / DSM 3757 / JCM 8879 / NBRC 14742 / NCIMB 2012 / VKM B-1768 / DS2) (Halobacterium volcanii), this protein is Sec-independent protein translocase protein TatCo.